Consider the following 90-residue polypeptide: Small ribosomal subunit protein bS16 (90 aa).

It belongs to the bacterial ribosomal protein bS16 family.

In Bacillus pumilus (strain SAFR-032), this protein is Small ribosomal subunit protein bS16.